A 548-amino-acid polypeptide reads, in one-letter code: Aspergilol synthase AuAP450 (548 aa).

A helical transmembrane segment spans residues 38-58 (PQLVITTLGALLLAAFYLLPS). Position 489 (cysteine 489) interacts with heme.

Belongs to the cytochrome P450 family. Heme is required as a cofactor.

It localises to the membrane. The protein operates within secondary metabolite biosynthesis; terpenoid biosynthesis. Functionally, cytochrome P450 monooxygenase; part of the gene cluster that mediates the biosynthesis of aspergiltriene A, aspergildienes A-D and aspergilols A-D. The bifunctional terpene synthase AuAS converts DMAPP and IPP into sesterterpenes. The C-terminal prenyltransferase (PT) domain of AuAS catalyzes formation of GFPP, whereas the N-terminal terpene cyclase (TC) domain catalyzes the cyclization of GFPP into 5 distinct sesterterpenes: aspergiltriene A, aspergildiene A, aspergildiene B, aspergildiene C and aspergildiene D. The cytochrome P450 monooxygenase AP450 then hydroxylates the aspergildienes A, B, C and D to yield the corresponding sesterterpene alcohols, aspergilols A-D. The protein is Aspergilol synthase AuAP450 of Aspergillus ustus.